We begin with the raw amino-acid sequence, 486 residues long: Ribosomal protein uS12 methylthiotransferase RimO (486 aa).

The region spanning 9-125 (RSVALVTLGC…LSSHLEAILH (117 aa)) is the MTTase N-terminal domain. Cysteine 18, cysteine 54, cysteine 88, cysteine 191, cysteine 195, and cysteine 198 together coordinate [4Fe-4S] cluster. In terms of domain architecture, Radical SAM core spans 177 to 408 (LGSGPWAPVK…RLVEELVTQR (232 aa)). Residues 410-482 (EERLGEVVEV…GADLLAEPLV (73 aa)) enclose the TRAM domain.

Belongs to the methylthiotransferase family. RimO subfamily. Requires [4Fe-4S] cluster as cofactor.

The protein resides in the cytoplasm. The catalysed reaction is L-aspartate(89)-[ribosomal protein uS12]-hydrogen + (sulfur carrier)-SH + AH2 + 2 S-adenosyl-L-methionine = 3-methylsulfanyl-L-aspartate(89)-[ribosomal protein uS12]-hydrogen + (sulfur carrier)-H + 5'-deoxyadenosine + L-methionine + A + S-adenosyl-L-homocysteine + 2 H(+). In terms of biological role, catalyzes the methylthiolation of an aspartic acid residue of ribosomal protein uS12. This Kineococcus radiotolerans (strain ATCC BAA-149 / DSM 14245 / SRS30216) protein is Ribosomal protein uS12 methylthiotransferase RimO.